Reading from the N-terminus, the 209-residue chain is Orotate phosphoribosyltransferase (209 aa).

5-phospho-alpha-D-ribose 1-diphosphate contacts are provided by residues R96, K100, H102, and 122-130 (EDLISTGGS). S126 contributes to the orotate binding site.

This sequence belongs to the purine/pyrimidine phosphoribosyltransferase family. PyrE subfamily. In terms of assembly, homodimer. Mg(2+) serves as cofactor.

It carries out the reaction orotidine 5'-phosphate + diphosphate = orotate + 5-phospho-alpha-D-ribose 1-diphosphate. The protein operates within pyrimidine metabolism; UMP biosynthesis via de novo pathway; UMP from orotate: step 1/2. In terms of biological role, catalyzes the transfer of a ribosyl phosphate group from 5-phosphoribose 1-diphosphate to orotate, leading to the formation of orotidine monophosphate (OMP). This chain is Orotate phosphoribosyltransferase, found in Streptococcus thermophilus (strain ATCC BAA-491 / LMD-9).